Here is a 390-residue protein sequence, read N- to C-terminus: 8-amino-7-oxononanoate synthase (390 aa).

Residue R19 participates in substrate binding. Residue 106 to 107 (GY) coordinates pyridoxal 5'-phosphate. Residue H131 participates in substrate binding. S176, H204, and T233 together coordinate pyridoxal 5'-phosphate. K236 is modified (N6-(pyridoxal phosphate)lysine). T350 lines the substrate pocket.

This sequence belongs to the class-II pyridoxal-phosphate-dependent aminotransferase family. BioF subfamily. As to quaternary structure, homodimer. Pyridoxal 5'-phosphate is required as a cofactor.

It carries out the reaction 6-carboxyhexanoyl-[ACP] + L-alanine + H(+) = (8S)-8-amino-7-oxononanoate + holo-[ACP] + CO2. It participates in cofactor biosynthesis; biotin biosynthesis. In terms of biological role, catalyzes the decarboxylative condensation of pimeloyl-[acyl-carrier protein] and L-alanine to produce 8-amino-7-oxononanoate (AON), [acyl-carrier protein], and carbon dioxide. The protein is 8-amino-7-oxononanoate synthase of Pseudomonas putida (strain ATCC 700007 / DSM 6899 / JCM 31910 / BCRC 17059 / LMG 24140 / F1).